We begin with the raw amino-acid sequence, 365 residues long: Elongation factor Tu (365 aa).

Residues 1–7 (HVDHGKT), 62–66 (DCPGH), and 117–120 (NKCD) each bind GTP. In terms of domain architecture, tr-type G spans 1–185 (HVDHGKTTLT…ILDTYIPEPK (185 aa)). Thr-7 is a Mg(2+) binding site.

This sequence belongs to the TRAFAC class translation factor GTPase superfamily. Classic translation factor GTPase family. EF-Tu/EF-1A subfamily. As to quaternary structure, monomer.

The protein localises to the cytoplasm. The catalysed reaction is GTP + H2O = GDP + phosphate + H(+). Functionally, GTP hydrolase that promotes the GTP-dependent binding of aminoacyl-tRNA to the A-site of ribosomes during protein biosynthesis. The protein is Elongation factor Tu of Buchnera aphidicola subsp. Melaphis rhois.